The following is a 767-amino-acid chain: Photosystem I P700 chlorophyll a apoprotein A1 (767 aa).

The segment at 1–22 (MTISPPESGEKDKKILESPVKA) is disordered. Positions 8-22 (SGEKDKKILESPVKA) are enriched in basic and acidic residues. 8 helical membrane-spanning segments follow: residues 76–99 (IFSAHFGHLAVIFIWMSAAFFHGA), 162–185 (LMALAIGAVVMAALMLHAGIFHYH), 201–225 (LNHHIAGLVGLGSLAWAGHCIHIGA), 309–327 (VSHHHLAFGVIAIIGGHMY), 368–391 (RHAQLSVNLAMLGSLSILISHHMY), 407–433 (LGLFTHHMWIGGLFIVGAGAHAGIAMV), 455–477 (ALISHLNWVCMWLGFHSFGLYIH), and 558–576 (LMIHHIHAFQIHVTVLILL). C600 and C609 together coordinate [4Fe-4S] cluster. 2 consecutive transmembrane segments (helical) span residues 616–637 (HVFLGLFWMYNCLSIVIFHFSW) and 681–703 (ISMYGLMFLGAHFIWAFSLMFLF). H692 is a binding site for divinylchlorophyll a'. Positions 700 and 708 each coordinate divinyl chlorophyll a. Phylloquinone is bound at residue W709. A helical transmembrane segment spans residues 741 to 761 (AVGVTHFLVGGIATTWAFFHA).

The protein belongs to the PsaA/PsaB family. As to quaternary structure, the PsaA/B heterodimer binds the P700 divinyl chlorophyll special pair and subsequent electron acceptors. PSI consists of a core antenna complex that captures photons, and an electron transfer chain that converts photonic excitation into a charge separation. The cyanobacterial PSI reaction center is composed of one copy each of PsaA,B,C,D,E,F,I,J,K,L,M and X, and forms trimeric complexes. Requires PSI electron transfer chain: 5 divinyl chlorophyll a, 1 divinyl chlorophyll a', 2 phylloquinones and 3 4Fe-4S clusters. PSI core antenna: 90 divinyl chlorophyll a, 22 carotenoids, 3 phospholipids and 1 galactolipid. P700 is a divinyl chlorophyll a/divinyl chlorophyll a' dimer, A0 is one or more divinyl chlorophyll a, A1 is one or both phylloquinones and FX is a shared 4Fe-4S iron-sulfur center. as cofactor.

It localises to the cellular thylakoid membrane. The catalysed reaction is reduced [plastocyanin] + hnu + oxidized [2Fe-2S]-[ferredoxin] = oxidized [plastocyanin] + reduced [2Fe-2S]-[ferredoxin]. Its function is as follows. PsaA and PsaB bind P700, the primary electron donor of photosystem I (PSI), as well as the electron acceptors A0, A1 and FX. PSI is a plastocyanin/cytochrome c6-ferredoxin oxidoreductase, converting photonic excitation into a charge separation, which transfers an electron from the donor P700 chlorophyll pair to the spectroscopically characterized acceptors A0, A1, FX, FA and FB in turn. Oxidized P700 is reduced on the lumenal side of the thylakoid membrane by plastocyanin or cytochrome c6. The chain is Photosystem I P700 chlorophyll a apoprotein A1 from Prochlorococcus marinus subsp. pastoris (strain CCMP1986 / NIES-2087 / MED4).